A 63-amino-acid polypeptide reads, in one-letter code: Prokaryotic ubiquitin-like protein Pup (63 aa).

A disordered region spans residues 1 to 35 (MSGQQSQINAGGGNGQGGDTPEFDAGQVSINSAGT). Residues 19–57 (DTPEFDAGQVSINSAGTDDLLDEIDGLLESNAEEFVRSY) form an ARC ATPase binding region. Residue glutamate 63 forms an Isoglutamyl lysine isopeptide (Glu-Lys) (interchain with K-? in acceptor proteins) linkage.

It belongs to the prokaryotic ubiquitin-like protein family. Strongly interacts with the proteasome-associated ATPase ARC through a hydrophobic interface; the interacting region of Pup lies in its C-terminal half. There is one Pup binding site per ARC hexamer ring.

It functions in the pathway protein degradation; proteasomal Pup-dependent pathway. Protein modifier that is covalently attached to lysine residues of substrate proteins, thereby targeting them for proteasomal degradation. The tagging system is termed pupylation. The chain is Prokaryotic ubiquitin-like protein Pup from Corynebacterium aurimucosum (strain ATCC 700975 / DSM 44827 / CIP 107346 / CN-1) (Corynebacterium nigricans).